The primary structure comprises 72 residues: Disintegrin basilicin (72 aa).

Residues Ala1 to Ala72 enclose the Disintegrin domain. Intrachain disulfides connect Cys5/Cys20, Cys7/Cys15, Cys14/Cys37, Cys28/Cys34, Cys33/Cys58, and Cys46/Cys65. Positions Arg50–Asp52 match the Cell attachment site motif.

This sequence belongs to the venom metalloproteinase (M12B) family. P-II subfamily. P-IIa sub-subfamily. Monomer (disintegrin). Expressed by the venom gland.

Its subcellular location is the secreted. Its function is as follows. Inhibits fibrinogen interaction with platelets. Acts by binding to alpha-IIb/beta-3 (ITGA2B/ITGB3) on the platelet surface and inhibits aggregation induced by ADP, thrombin, platelet-activating factor and collagen. This chain is Disintegrin basilicin, found in Crotalus basiliscus (Mexican west-coast rattlesnake).